Consider the following 1392-residue polypeptide: ATP-dependent helicase/nuclease subunit A (1392 aa).

One can recognise a UvrD-like helicase ATP-binding domain in the interval 3–489 (NPKWTPAQQA…IDLNQNFRSR (487 aa)). 24–31 (AAAGSGKT) contributes to the ATP binding site. Disordered regions lie at residues 291-319 (RGSK…KARD), 556-594 (RGAE…LEEA), and 1051-1126 (GPVQ…LDTK). 2 stretches are compositionally biased toward basic and acidic residues: residues 305-319 (ENSK…KARD) and 569-583 (AKGE…REPE). Positions 556 to 886 (RGAEDAATGA…RFITVHSSKG (331 aa)) constitute a UvrD-like helicase C-terminal domain. The segment covering 584 to 594 (SGDDESSLEEA) has biased composition (acidic residues). Residues 1088–1113 (ASGKTEIPGETKNSEETKTSEDKKNL) show a composition bias toward basic and acidic residues.

The protein belongs to the helicase family. AddA subfamily. In terms of assembly, heterodimer of AddA and AddB/RexB. Mg(2+) serves as cofactor.

The catalysed reaction is Couples ATP hydrolysis with the unwinding of duplex DNA by translocating in the 3'-5' direction.. It carries out the reaction ATP + H2O = ADP + phosphate + H(+). In terms of biological role, the heterodimer acts as both an ATP-dependent DNA helicase and an ATP-dependent, dual-direction single-stranded exonuclease. Recognizes the chi site generating a DNA molecule suitable for the initiation of homologous recombination. The AddA nuclease domain is required for chi fragment generation; this subunit has the helicase and 3' -&gt; 5' nuclease activities. This Desulfitobacterium hafniense (strain Y51) protein is ATP-dependent helicase/nuclease subunit A.